The sequence spans 220 residues: Ribose-5-phosphate isomerase A (220 aa).

Residues 28–31 (TGST), 81–84 (DGAD), and 94–97 (KGGG) each bind substrate. The Proton acceptor role is filled by E103. Residue K121 coordinates substrate.

It belongs to the ribose 5-phosphate isomerase family. In terms of assembly, homodimer.

It catalyses the reaction aldehydo-D-ribose 5-phosphate = D-ribulose 5-phosphate. The protein operates within carbohydrate degradation; pentose phosphate pathway; D-ribose 5-phosphate from D-ribulose 5-phosphate (non-oxidative stage): step 1/1. In terms of biological role, catalyzes the reversible conversion of ribose-5-phosphate to ribulose 5-phosphate. This is Ribose-5-phosphate isomerase A from Yersinia enterocolitica serotype O:8 / biotype 1B (strain NCTC 13174 / 8081).